Here is a 253-residue protein sequence, read N- to C-terminus: Isoprenyl transferase (253 aa).

The active site involves aspartate 30. Aspartate 30 provides a ligand contact to Mg(2+). Substrate is bound by residues 31 to 34 (GNRR), tryptophan 35, histidine 51, and 79 to 81 (STE). Asparagine 82 (proton acceptor) is an active-site residue. Substrate-binding positions include phenylalanine 83, arginine 85, arginine 202, and 208–210 (RVS). Mg(2+) is bound at residue glutamate 221.

The protein belongs to the UPP synthase family. Homodimer. Requires Mg(2+) as cofactor.

Functionally, catalyzes the condensation of isopentenyl diphosphate (IPP) with allylic pyrophosphates generating different type of terpenoids. This chain is Isoprenyl transferase, found in Chlamydia trachomatis serovar D (strain ATCC VR-885 / DSM 19411 / UW-3/Cx).